The following is a 448-amino-acid chain: MKGFIDDANYSVGLLDEGTNLGNVIDNYVYEHTLTGKNAFFVGDLGKIVKKHSQWQTVVAQIKPFYTVKCNSTPAVLEILAALGTGFACSSKNEMALVQELGVSPENIIFTSPCKQVSQIKYAAKVGVNIMTCDNEIELKKIARNHPNAKVLLHIATEDNIGGEDGNMKFGTTLKNCRHLLECAKELDVQIIGVKFHVSSACKEYQVYVHALSDARCVFDMAGEFGFTMNMLDIGGGFTGTEIQLEEVNHVISPLLDIYFPEGSGIQIISEPGSYYVSSAFTLAVNIIAKKVVENDKFSSGVEKNGSDEPAFVYYMNDGVYGSFASKLSEDLNTIPEVHKKYKEDEPLFTSSLWGPSCDELDQIVESCLLPELNVGDWLIFDNMGADSFHEPSAFNDFQRPAIYFMMSFSDWYEMQDAGITSDAMMKNFFFAPSCIQLSQEDSFSTEA.

Belongs to the Orn/Lys/Arg decarboxylase class-II family. ODC antizyme inhibitor subfamily. Monomer. Interacts with OAZ1 and OAZ3; this interaction disrupts the interaction between the antizyme and ODC1. Ubiquitinated, leading to its proteasomal degradation; a process that is reduced in presence of antizyme OAZ1. Expressed during testis development.

The protein resides in the nucleus. Its function is as follows. Antizyme inhibitor (AZI) protein that positively regulates ornithine decarboxylase (ODC) activity and polyamine uptake. AZI is an enzymatically inactive ODC homolog that counteracts the negative effect of ODC antizymes (AZs) OAZ1, OAZ2 and OAZ3 on ODC activity by competing with ODC for antizyme-binding. Inhibits antizyme-dependent ODC degradation and releases ODC monomers from their inactive complex with antizymes, leading to formation of the catalytically active ODC homodimer and restoring polyamine production. The protein is Antizyme inhibitor 1 (Azin1) of Mus musculus (Mouse).